Reading from the N-terminus, the 122-residue chain is Large ribosomal subunit protein uL14 (122 aa).

Belongs to the universal ribosomal protein uL14 family. Part of the 50S ribosomal subunit. Forms a cluster with proteins L3 and L19. In the 70S ribosome, L14 and L19 interact and together make contacts with the 16S rRNA in bridges B5 and B8.

Its function is as follows. Binds to 23S rRNA. Forms part of two intersubunit bridges in the 70S ribosome. This is Large ribosomal subunit protein uL14 from Nocardioides sp. (strain ATCC BAA-499 / JS614).